The chain runs to 291 residues: 33 kDa chaperonin (291 aa).

Cystine bridges form between Cys-229-Cys-231 and Cys-262-Cys-265.

Belongs to the HSP33 family. In terms of processing, under oxidizing conditions two disulfide bonds are formed involving the reactive cysteines. Under reducing conditions zinc is bound to the reactive cysteines and the protein is inactive.

The protein localises to the cytoplasm. Its function is as follows. Redox regulated molecular chaperone. Protects both thermally unfolding and oxidatively damaged proteins from irreversible aggregation. Plays an important role in the bacterial defense system toward oxidative stress. In Aliivibrio salmonicida (strain LFI1238) (Vibrio salmonicida (strain LFI1238)), this protein is 33 kDa chaperonin.